Reading from the N-terminus, the 343-residue chain is Protein RecA (343 aa).

66–73 is an ATP binding site; the sequence is GPESSGKT.

Belongs to the RecA family.

It localises to the cytoplasm. Its function is as follows. Can catalyze the hydrolysis of ATP in the presence of single-stranded DNA, the ATP-dependent uptake of single-stranded DNA by duplex DNA, and the ATP-dependent hybridization of homologous single-stranded DNAs. It interacts with LexA causing its activation and leading to its autocatalytic cleavage. The polypeptide is Protein RecA (Rickettsia massiliae (strain Mtu5)).